We begin with the raw amino-acid sequence, 187 residues long: Peptide deformylase 1 (187 aa).

Cysteine 107 and histidine 149 together coordinate Fe cation. Residue glutamate 150 is part of the active site. Histidine 153 is a Fe cation binding site.

The protein belongs to the polypeptide deformylase family. Fe(2+) is required as a cofactor.

The catalysed reaction is N-terminal N-formyl-L-methionyl-[peptide] + H2O = N-terminal L-methionyl-[peptide] + formate. Functionally, removes the formyl group from the N-terminal Met of newly synthesized proteins. Requires at least a dipeptide for an efficient rate of reaction. N-terminal L-methionine is a prerequisite for activity but the enzyme has broad specificity at other positions. The polypeptide is Peptide deformylase 1 (Nostoc sp. (strain PCC 7120 / SAG 25.82 / UTEX 2576)).